The chain runs to 255 residues: Hydroxyacylglutathione hydrolase (255 aa).

Zn(2+) contacts are provided by H56, H58, D60, H61, H114, D133, and H171.

The protein belongs to the metallo-beta-lactamase superfamily. Glyoxalase II family. In terms of assembly, monomer. Requires Zn(2+) as cofactor.

The catalysed reaction is an S-(2-hydroxyacyl)glutathione + H2O = a 2-hydroxy carboxylate + glutathione + H(+). Its pathway is secondary metabolite metabolism; methylglyoxal degradation; (R)-lactate from methylglyoxal: step 2/2. Functionally, thiolesterase that catalyzes the hydrolysis of S-D-lactoyl-glutathione to form glutathione and D-lactic acid. The chain is Hydroxyacylglutathione hydrolase from Bradyrhizobium sp. (strain BTAi1 / ATCC BAA-1182).